A 430-amino-acid polypeptide reads, in one-letter code: GTPase Obg (430 aa).

The 158-residue stretch at 1-158 folds into the Obg domain; it reads MFVDQVKISL…LEVTLELKLL (158 aa). The interval 118–145 is disordered; it reads RGGRGGRGNSRFATPRNPAPDFSENGEP. In terms of domain architecture, OBG-type G spans 159 to 329; the sequence is ADVGLVGFPS…LLYQIADKLE (171 aa). GTP is bound by residues 165–172, 190–194, 212–215, 282–285, and 310–312; these read GFPSVGKS, FTTIK, DLPG, NKMD, and STI. Mg(2+) is bound by residues Ser172 and Thr192. Residues 352–430 form the OCT domain; that stretch reads KHTPSADKFT…ILGGEFEFVE (79 aa).

It belongs to the TRAFAC class OBG-HflX-like GTPase superfamily. OBG GTPase family. In terms of assembly, monomer. The cofactor is Mg(2+).

It is found in the cytoplasm. An essential GTPase which binds GTP, GDP and possibly (p)ppGpp with moderate affinity, with high nucleotide exchange rates and a fairly low GTP hydrolysis rate. Plays a role in control of the cell cycle, stress response, ribosome biogenesis and in those bacteria that undergo differentiation, in morphogenesis control. This chain is GTPase Obg, found in Staphylococcus epidermidis (strain ATCC 12228 / FDA PCI 1200).